The primary structure comprises 156 residues: Ribosomal RNA large subunit methyltransferase H (156 aa).

S-adenosyl-L-methionine-binding positions include L73, G104, and 123-128 (IGPLTL).

The protein belongs to the RNA methyltransferase RlmH family. In terms of assembly, homodimer.

Its subcellular location is the cytoplasm. The enzyme catalyses pseudouridine(1915) in 23S rRNA + S-adenosyl-L-methionine = N(3)-methylpseudouridine(1915) in 23S rRNA + S-adenosyl-L-homocysteine + H(+). Functionally, specifically methylates the pseudouridine at position 1915 (m3Psi1915) in 23S rRNA. The sequence is that of Ribosomal RNA large subunit methyltransferase H from Xanthomonas campestris pv. campestris (strain 8004).